A 397-amino-acid chain; its full sequence is Phosphoglycerate kinase (397 aa).

Residues 21–23, R36, 59–62, R119, and R156 each bind substrate; these read DFN and HLGR. ATP is bound by residues K207, G295, E326, and 353 to 356; that span reads GGDS.

It belongs to the phosphoglycerate kinase family. In terms of assembly, monomer.

It localises to the cytoplasm. It carries out the reaction (2R)-3-phosphoglycerate + ATP = (2R)-3-phospho-glyceroyl phosphate + ADP. Its pathway is carbohydrate degradation; glycolysis; pyruvate from D-glyceraldehyde 3-phosphate: step 2/5. The sequence is that of Phosphoglycerate kinase from Enterococcus faecalis (strain ATCC 700802 / V583).